A 223-amino-acid chain; its full sequence is ATP-dependent Clp protease proteolytic subunit 2 (223 aa).

Positions 1–40 are disordered; that stretch reads MHAGSGNDMDITRMTPTRLDDEPDAPEPETREDDNKTLNS. Residues 21 to 32 show a composition bias toward acidic residues; that stretch reads DEPDAPEPETRE. Catalysis depends on S124, which acts as the Nucleophile. H149 is a catalytic residue.

This sequence belongs to the peptidase S14 family. As to quaternary structure, fourteen ClpP subunits assemble into 2 heptameric rings which stack back to back to give a disk-like structure with a central cavity, resembling the structure of eukaryotic proteasomes.

It is found in the cytoplasm. It catalyses the reaction Hydrolysis of proteins to small peptides in the presence of ATP and magnesium. alpha-casein is the usual test substrate. In the absence of ATP, only oligopeptides shorter than five residues are hydrolyzed (such as succinyl-Leu-Tyr-|-NHMec, and Leu-Tyr-Leu-|-Tyr-Trp, in which cleavage of the -Tyr-|-Leu- and -Tyr-|-Trp bonds also occurs).. Cleaves peptides in various proteins in a process that requires ATP hydrolysis. Has a chymotrypsin-like activity. Plays a major role in the degradation of misfolded proteins. This Gluconobacter oxydans (strain 621H) (Gluconobacter suboxydans) protein is ATP-dependent Clp protease proteolytic subunit 2.